We begin with the raw amino-acid sequence, 484 residues long: Schwannomin-interacting protein 1 (484 aa).

Positions 1 to 28 (MERSEQRVRAAWDCDPGKQADRDYREDG) are enriched in basic and acidic residues. Disordered stretches follow at residues 1–74 (MERS…VSAL), 86–220 (KKVI…PPMD), 232–258 (QFRE…ERES), and 305–350 (SGSD…ESLD). Over residues 33–67 (SDAGSSSSSRASSQSNSTKVTPCSECKSSSSPGGS) the composition is skewed to low complexity. Over residues 92 to 106 (WAPEEDGEEEEEEDD) the composition is skewed to acidic residues. The segment covering 107–120 (RGYRDDGCPAREPG) has biased composition (basic and acidic residues). Over residues 123–137 (SARIGSSGSGSRSAA) the composition is skewed to low complexity. The span at 150–159 (HPHDPQDLRH) shows a compositional bias: basic and acidic residues. The span at 239-252 (RNQGQARTNSTSAQ) shows a compositional bias: polar residues. The span at 306–320 (GSDKDSDADDSKTET) shows a compositional bias: basic and acidic residues. The segment covering 321–332 (SLDTPLSPMSKQ) has biased composition (polar residues). Positions 341 to 350 (TTEEESESLD) are enriched in acidic residues. A coiled-coil region spans residues 421–455 (IGQLQVIVNDLHSQIESLNEELVQLLLIRDELHTE).

The protein belongs to the SCHIP1 family. Homooligomer (via coiled coil domain). Interacts with NF2; the interaction is direct. Interacts with ANK3.

This is Schwannomin-interacting protein 1 from Mus musculus (Mouse).